The following is a 167-amino-acid chain: Endoribonuclease YbeY (167 aa).

The Zn(2+) site is built by His-131, His-135, and His-141.

It belongs to the endoribonuclease YbeY family. It depends on Zn(2+) as a cofactor.

It is found in the cytoplasm. Its function is as follows. Single strand-specific metallo-endoribonuclease involved in late-stage 70S ribosome quality control and in maturation of the 3' terminus of the 16S rRNA. The polypeptide is Endoribonuclease YbeY (Rickettsia rickettsii (strain Sheila Smith)).